A 555-amino-acid polypeptide reads, in one-letter code: E3 ubiquitin-protein ligase ARIH1 (555 aa).

Acidic residues predominate over residues 1 to 47 (MDSDEGYNYEFDEDEECSEEDSGAEEEEDDDEDEPDDDNLDLGEVEL). Positions 1 to 93 (MDSDEGYNYE…GGGGGPGHEQ (93 aa)) are disordered. Residues 65–90 (ETGGGGGSALGPGGGGGGGGGGGGPG) show a composition bias toward gly residues. The tract at residues 103-151 (TAEQILQHMVECIREVNEVIQNPATITRILLSHFNWDKEKLMERYFDGN) is UBA-like. N6-acetyllysine is present on K140. The segment at 180–391 (QDMPCQICYL…SAWYNCNRYN (212 aa)) is TRIAD supradomain. Zn(2+) contacts are provided by C184, C187, C201, H203, C206, C209, C229, C234, C274, C279, C295, C297, C302, C305, H310, C315, C342, and C345. An RING-type 1 zinc finger spans residues 184–234 (CQICYLNYPNSYFTGLECGHKFCMQCWSEYLTTKIMEEGMGQTISCPAHGC). The IBR-type zinc-finger motif lies at 254–315 (LKYQHLITNS…GENWHDPVKC (62 aa)). An RING-type 2; atypical zinc finger spans residues 342 to 373 (CPKCHVTIEKDGGCNHMVCRNQNCKAEFCWVC). C355 is an active-site residue. Zn(2+) is bound by residues C360, C365, C370, C373, H380, and C387. The ariadne domain stretch occupies residues 406–555 (RAALQRYLFY…EKDLWEYIED (150 aa)).

It belongs to the RBR family. Ariadne subfamily. In terms of assembly, interacts (via the first RING-type zinc finger) with UBE2L3. Associates with cullin-RING ubiquitin ligase (CRL) complexes containing CUL1, CUL2 and CUL3. Interacts with neddylated CUL1. Interacts with neddylated CUL2. Interacts with neddylated CUL3. Interacts with neddylated CUL4A. Widely expressed.

Its subcellular location is the cytoplasm. The protein resides in the nucleus. It localises to the cajal body. The catalysed reaction is [E2 ubiquitin-conjugating enzyme]-S-ubiquitinyl-L-cysteine + [acceptor protein]-L-lysine = [E2 ubiquitin-conjugating enzyme]-L-cysteine + [acceptor protein]-N(6)-ubiquitinyl-L-lysine.. It participates in protein modification; protein ubiquitination. With respect to regulation, autoinhibited by the ariadne domain, which masks the second RING-type zinc finger that contains the active site and inhibits the E3 activity. Inhibition is relieved upon binding to neddylated cullin-RING ubiquitin ligase complexes, which activate the E3 ligase activity of ARIH1. In terms of biological role, E3 ubiquitin-protein ligase, which catalyzes ubiquitination of target proteins together with ubiquitin-conjugating enzyme E2 UBE2L3. Acts as an atypical E3 ubiquitin-protein ligase by working together with cullin-RING ubiquitin ligase (CRL) complexes and initiating ubiquitination of CRL substrates: associates with CRL complexes and specifically mediates addition of the first ubiquitin on CRLs targets. The initial ubiquitin is then elongated by CDC34/UBE2R1 and UBE2R2. E3 ubiquitin-protein ligase activity is activated upon binding to neddylated cullin-RING ubiquitin ligase complexes. Plays a role in protein translation in response to DNA damage by mediating ubiquitination of EIF4E2, the consequences of EIF4E2 ubiquitination are however unclear. According to a report, EIF4E2 ubiquitination leads to promote EIF4E2 cap-binding and protein translation arrest. According to another report EIF4E2 ubiquitination leads to its subsequent degradation. Acts as the ligase involved in ISGylation of EIF4E2. In vitro, controls the degradation of the LINC (LInker of Nucleoskeleton and Cytoskeleton) complex member SUN2 and may therefore have a role in the formation and localization of the LINC complex, and as a consequence, may act in nuclear subcellular localization and nuclear morphology. This Mus musculus (Mouse) protein is E3 ubiquitin-protein ligase ARIH1 (Arih1).